A 296-amino-acid polypeptide reads, in one-letter code: Cytidine deaminase (296 aa).

CMP/dCMP-type deaminase domains are found at residues threonine 47–lysine 167 and aspartate 186–valine 296. Asparagine 88–glutamate 90 is a substrate binding site. Histidine 101 lines the Zn(2+) pocket. Glutamate 103 (proton donor) is an active-site residue. 2 residues coordinate Zn(2+): cysteine 128 and cysteine 131.

The protein belongs to the cytidine and deoxycytidylate deaminase family. Homodimer. Zn(2+) serves as cofactor.

It carries out the reaction cytidine + H2O + H(+) = uridine + NH4(+). It catalyses the reaction 2'-deoxycytidine + H2O + H(+) = 2'-deoxyuridine + NH4(+). Its function is as follows. This enzyme scavenges exogenous and endogenous cytidine and 2'-deoxycytidine for UMP synthesis. This is Cytidine deaminase from Shewanella sp. (strain MR-4).